The chain runs to 72 residues: MAKDDVIEVDGKVVDTMPNAMFTVELENGHQVLATISGKIRKNYIRILPGDKVQVELSPYDLTRGRITYRFK.

The S1-like domain occupies alanine 2–lysine 72.

This sequence belongs to the IF-1 family. In terms of assembly, component of the 30S ribosomal translation pre-initiation complex which assembles on the 30S ribosome in the order IF-2 and IF-3, IF-1 and N-formylmethionyl-tRNA(fMet); mRNA recruitment can occur at any time during PIC assembly.

The protein resides in the cytoplasm. In terms of biological role, one of the essential components for the initiation of protein synthesis. Stabilizes the binding of IF-2 and IF-3 on the 30S subunit to which N-formylmethionyl-tRNA(fMet) subsequently binds. Helps modulate mRNA selection, yielding the 30S pre-initiation complex (PIC). Upon addition of the 50S ribosomal subunit IF-1, IF-2 and IF-3 are released leaving the mature 70S translation initiation complex. In Lactococcus lactis subsp. lactis (strain IL1403) (Streptococcus lactis), this protein is Translation initiation factor IF-1.